The chain runs to 147 residues: Hemoglobin larval subunit beta-1 (147 aa).

The 145-residue stretch at 3-147 folds into the Globin domain; sequence HLSADEKSAI…LVAALSHGYF (145 aa). Heme b is bound by residues His64 and His93.

It belongs to the globin family. In terms of assembly, heterotetramer of two alpha chains and two beta chains. Red blood cells.

Its function is as follows. This is a larval (tadpole) beta-globin. The sequence is that of Hemoglobin larval subunit beta-1 from Xenopus laevis (African clawed frog).